An 883-amino-acid chain; its full sequence is Ankyrin repeat and SAM domain-containing protein 6 (883 aa).

10 ANK repeats span residues 8 to 37, 68 to 97, 101 to 130, 134 to 163, 181 to 210, 215 to 244, 282 to 312, 316 to 345, 350 to 379, and 383 to 414; these read PGLQLLLRACEQGDTDTARRLLEPGADPVA, AGNSALQLAAAGGHEPLVRFLLRRGASVNS, YGWSALMQAARCGHVSVAHLLLDHGADVNA, LGASVLTVASRGGHLGVVKLLLEAGAIVDH, LGITALMAAVQHGHEAVVRLLMEWGADPNH, VGWSPLMLAALLGKLNVAQQLVEKGANPDH, KRRPDIFYALKMGNFQLVKEIADEDPNHVNL, DGATPLMLAAVTGHLPLVQLLVEKHADMDK, HGWTALMQATYHGNKEIVKYLLNQGADVAL, and NGYTAFDLVMLLNDPDTELVRLLASVCMQVNK. The disordered stretch occupies residues 30-50; sequence EPGADPVAGPEAGAEPAGPEA. 4 disordered regions span residues 414–439, 490–522, 566–773, and 852–883; these read KDRGRPSHRPPLPHSKARQPWSIPVL, MRAPPQDRTSHLGPPEAAHATKDSGPGNPRREK, SHTC…ITDE, and SFESSASNTRAPGNGPSMAGWTRPEETVSSRR. The span at 566–576 shows a compositional bias: basic and acidic residues; sequence SHTCHNGKADP. The span at 607-630 shows a compositional bias: low complexity; that stretch reads PSISRSPASPASSGSFNHSPHSSG. Residues 631–640 are compositionally biased toward gly residues; it reads GASGIGGMSR. Phosphoserine is present on serine 649. Polar residues predominate over residues 649–661; the sequence is SGGSVDSVLSQIA. 2 stretches are compositionally biased toward low complexity: residues 687–711 and 720–737; these read SSSPPELPASLPSSGSGSSSGPSSS and PPSGTSATSKSTSPTLTP. A phosphoserine mark is found at serine 732 and serine 740. Over residues 748 to 768 the composition is skewed to low complexity; the sequence is SSVSSSSSHRQSKSSGGSSSG. An SAM domain is found at 771-834; it reads TDEDELTGIL…LAAISELNAG (64 aa). Residues 852–862 are compositionally biased toward polar residues; it reads SFESSASNTRA. Over residues 874–883 the composition is skewed to basic and acidic residues; that stretch reads RPEETVSSRR.

In terms of assembly, homooligomer. Interacts with NEK8. Central component of a complex containing at least ANKS6, INVS, NEK8 and NPHP3. ANKS6 may organize complex assembly by linking INVS and NPHP3 to NEK8 and INVS may target the complex to the proximal ciliary axoneme. Interacts (via SAM domain) with BICC1 (via KH domains) in an RNA-dependent manner. Interacts (via SAM domain) with ANKS3 (via SAM domain). Post-translationally, hydroxylated at Asn-129, most probably by HIF1AN. This hydroxylation results in decreased NEK8-binding. Expressed in kidney (at protein level).

It localises to the cell projection. It is found in the cilium. The protein resides in the cytoplasm. Its function is as follows. Required for renal function. This is Ankyrin repeat and SAM domain-containing protein 6 (Anks6) from Mus musculus (Mouse).